We begin with the raw amino-acid sequence, 154 residues long: MMGGGQQQQLQQLSEELQAIDEEIDELREEVDDLQSEQTSIDEAMDAIQTLESGATVQVPLGGDAYVRAEIQDADEIIVGLGADFAAEQSADNAVESLSTKQDALDNRIESLRDDIDELETESSQLEQQAQQMQQQMQQQQMQQMQDQQPEDNE.

The segment covering 92–102 has biased composition (polar residues); sequence DNAVESLSTKQ. The disordered stretch occupies residues 92–154; the sequence is DNAVESLSTK…MQDQQPEDNE (63 aa). Positions 103–114 are enriched in basic and acidic residues; sequence DALDNRIESLRD. A compositionally biased stretch (low complexity) spans 128–148; that stretch reads QQAQQMQQQMQQQQMQQMQDQ.

Belongs to the prefoldin subunit alpha family. Heterohexamer of two alpha and four beta subunits.

It is found in the cytoplasm. Its function is as follows. Molecular chaperone capable of stabilizing a range of proteins. Seems to fulfill an ATP-independent, HSP70-like function in archaeal de novo protein folding. This Haloquadratum walsbyi (strain DSM 16790 / HBSQ001) protein is Prefoldin subunit alpha.